The sequence spans 77 residues: Acyl carrier protein (77 aa).

A Carrier domain is found at 2-77 (ASIEKRIKEI…DAIDYITDHT (76 aa)). O-(pantetheine 4'-phosphoryl)serine is present on S37.

It belongs to the acyl carrier protein (ACP) family. Post-translationally, 4'-phosphopantetheine is transferred from CoA to a specific serine of apo-ACP by AcpS. This modification is essential for activity because fatty acids are bound in thioester linkage to the sulfhydryl of the prosthetic group.

The protein resides in the cytoplasm. The protein operates within lipid metabolism; fatty acid biosynthesis. In terms of biological role, carrier of the growing fatty acid chain in fatty acid biosynthesis. The chain is Acyl carrier protein from Geobacter sp. (strain M21).